The following is a 596-amino-acid chain: DNA mismatch repair protein MutL (596 aa).

This sequence belongs to the DNA mismatch repair MutL/HexB family.

Its function is as follows. This protein is involved in the repair of mismatches in DNA. It is required for dam-dependent methyl-directed DNA mismatch repair. May act as a 'molecular matchmaker', a protein that promotes the formation of a stable complex between two or more DNA-binding proteins in an ATP-dependent manner without itself being part of a final effector complex. This chain is DNA mismatch repair protein MutL, found in Leptospira borgpetersenii serovar Hardjo-bovis (strain JB197).